Reading from the N-terminus, the 605-residue chain is Ankyrin repeat domain-containing protein 13D (605 aa).

UIM domains follow at residues 482–501 (EDDDLLQFAIQQSLLEAGTE) and 528–547 (EEQLQLEQALQESLQLSTES). Low complexity predominate over residues 538 to 554 (QESLQLSTESRGPESPQ). Residues 538–605 (QESLQLSTES…RILQLSLTEH (68 aa)) are disordered. Serine 552 bears the Phosphoserine mark. Phosphothreonine is present on threonine 556. Low complexity predominate over residues 564–575 (SFEEQLRLALEL). UIM domains follow at residues 564–583 (SFEEQLRLALELSSREQEEL) and 589–605 (QEEDDLQRILQLSLTEH). A compositionally biased stretch (basic and acidic residues) spans 576–589 (SSREQEELERRGQQ).

As to quaternary structure, interacts with EGFR (ubiquitinated); the interaction is direct and may regulate EGFR internalization.

It is found in the cell membrane. Its subcellular location is the late endosome. Its function is as follows. Ubiquitin-binding protein that specifically recognizes and binds 'Lys-63'-linked ubiquitin. Does not bind 'Lys-48'-linked ubiquitin. Positively regulates the internalization of ligand-activated EGFR by binding to the Ub moiety of ubiquitinated EGFR at the cell membrane. The chain is Ankyrin repeat domain-containing protein 13D (Ankrd13d) from Mus musculus (Mouse).